The following is a 279-amino-acid chain: Large ribosomal subunit protein uL2 (279 aa).

2 disordered regions span residues 32–53 (SLLRPLPKHGGRNNAGRITTRH) and 225–279 (AMNP…KKRK). Residues 253-268 (KEGRTRHINKPSDKLI) show a composition bias toward basic and acidic residues. The span at 269–279 (VRRRNAGKKRK) shows a compositional bias: basic residues.

Belongs to the universal ribosomal protein uL2 family. In terms of assembly, part of the 50S ribosomal subunit. Forms a bridge to the 30S subunit in the 70S ribosome.

Its function is as follows. One of the primary rRNA binding proteins. Required for association of the 30S and 50S subunits to form the 70S ribosome, for tRNA binding and peptide bond formation. It has been suggested to have peptidyltransferase activity; this is somewhat controversial. Makes several contacts with the 16S rRNA in the 70S ribosome. This chain is Large ribosomal subunit protein uL2, found in Clavibacter michiganensis subsp. michiganensis (strain NCPPB 382).